Reading from the N-terminus, the 234-residue chain is RNA chaperone ProQ (234 aa).

Positions 104–130 (LEEAKARVQAQRDARKREAAENGEKRE) are enriched in basic and acidic residues. The tract at residues 104–186 (LEEAKARVQA…QRSTPVTSLE (83 aa)) is disordered. Residues 131–142 (PRRPRPAGKKPT) are compositionally biased toward basic residues. Composition is skewed to basic and acidic residues over residues 143-156 (ARRD…EVRK) and 163-176 (TSER…ETTE). Positions 177–186 (QRSTPVTSLE) are enriched in polar residues.

It belongs to the ProQ family.

The protein resides in the cytoplasm. Functionally, RNA chaperone with significant RNA binding, RNA strand exchange and RNA duplexing activities. May regulate ProP activity through an RNA-based, post-transcriptional mechanism. This Edwardsiella ictaluri (strain 93-146) protein is RNA chaperone ProQ.